The following is a 217-amino-acid chain: Outer-membrane lipoprotein LolB (217 aa).

Residues 1 to 20 form the signal peptide; sequence MSKTVRTLALGGLVLAGLSA. C21 carries N-palmitoyl cysteine lipidation. C21 carries S-diacylglycerol cysteine lipidation. Positions 105–124 are disordered; it reads DTTSGAGRLEGLEGGPRSGP.

This sequence belongs to the LolB family. Monomer.

The protein resides in the cell outer membrane. Its function is as follows. Plays a critical role in the incorporation of lipoproteins in the outer membrane after they are released by the LolA protein. The chain is Outer-membrane lipoprotein LolB from Xanthomonas axonopodis pv. citri (strain 306).